The chain runs to 471 residues: Eremophilane O-acetyltransferase ORF8 (471 aa).

This sequence belongs to the fumigaclavine B O-acetyltransferase family. In terms of assembly, monomer.

It participates in sesquiterpene biosynthesis. In terms of biological role, O-acetyltransferase; part of the gene cluster that mediates the biosynthesis of PR-toxin, a bicyclic sesquiterpene belonging to the eremophilane class and acting as a mycotoxin. The first step of the pathway is catalyzed by the aristolochene synthase which performs the cyclization of trans,trans-farnesyl diphosphate (FPP) to the bicyclic sesquiterpene aristolochene. Following the formation of aristolochene, the non-oxygenated aristolochene is converted to the trioxygenated intermediate eremofortin B, via 7-epi-neopetasone. This conversion appears to involve three enzymes, a hydroxysterol oxidase-like enzyme, the quinone-oxidase prx3 that forms the quinone-type-structure in the bicyclic nucleus of aristolochene with the C8-oxo group and the C-3 hydroxyl group, and the P450 monooxygenase ORF6 that introduces the epoxide at the double bond between carbons 1 and 2. No monoxy or dioxy-intermediates have been reported to be released to the broth, so these three early oxidative reactions may be coupled together. Eremofortin B is further oxidized by another P450 monooxygenase, that introduces a second epoxide between carbons 7 and 11 prior to acetylation to eremofortin A by the acetyltransferase ORF8. The second epoxidation may be performed by a second P450 monooxygenase. After the acetylation step, eremofortin A is converted to eremofortin C and then to PR-toxin. First the conversion of eremofortin A to eremofortin C proceeds by oxidation of the side chain of the molecule at C-12 and is catalyzed by the short-chain oxidoreductase prx1. The cytochrome P450 monooxygenase ORF6 is probably also involved in this step. The primary alcohol formed at C-12 is finally oxidized by the short-chain alcohol dehydrogenase prx4 that forms PR-toxin. The chain is Eremophilane O-acetyltransferase ORF8 from Penicillium roqueforti (strain FM164).